The primary structure comprises 516 residues: Putative glucosylceramidase 2 (516 aa).

Positions 1 to 23 are cleaved as a signal peptide; it reads MSIAWSCFVLGLFALASLQVALA. Glutamate 254 functions as the Proton donor in the catalytic mechanism. Glutamate 358 (nucleophile) is an active-site residue.

The protein belongs to the glycosyl hydrolase 30 family.

It carries out the reaction a beta-D-glucosylceramide + H2O = an N-acyl-sphingoid base + D-glucose. The enzyme catalyses a beta-D-glucosyl-(1&lt;-&gt;1')-N-acylsphing-4-enine + H2O = an N-acylsphing-4-enine + D-glucose. The catalysed reaction is an N-acyl-1-beta-D-glucosyl-15-methylhexadecasphing-4-enine + H2O = an N-acyl-15-methylhexadecasphing-4-enine + D-glucose. Its pathway is lipid metabolism; sphingolipid metabolism. In terms of biological role, glucosylceramidase that catalyzes the hydrolysis of glucosylceramides into free ceramides and glucose. C.elegans contain specific sphingoid bases, which are unique or different in structure compared to the sphingoid bases found in other animals. Two examples of these distinctive compounds are: 15-methylhexadecasphinganine and 15-methylhexadecasphing-4-enine. The polypeptide is Putative glucosylceramidase 2 (gba-2) (Caenorhabditis elegans).